The following is a 126-amino-acid chain: Large ribosomal subunit protein bL19 (126 aa).

This sequence belongs to the bacterial ribosomal protein bL19 family.

This protein is located at the 30S-50S ribosomal subunit interface and may play a role in the structure and function of the aminoacyl-tRNA binding site. This is Large ribosomal subunit protein bL19 from Dechloromonas aromatica (strain RCB).